The sequence spans 344 residues: Mitogen-activated protein kinase mpkC (344 aa).

The Protein kinase domain maps to Y19 to L298. ATP is bound by residues V25–V33 and K48. D140 (proton acceptor) is an active-site residue. Position 170 is a phosphothreonine (T170). The short motif at T170–Y172 is the TXY element. At Y172 the chain carries Phosphotyrosine.

Belongs to the protein kinase superfamily. Ser/Thr protein kinase family. MAP kinase subfamily. HOG1 sub-subfamily. It depends on Mg(2+) as a cofactor. Post-translationally, dually phosphorylated on Thr-170 and Tyr-172, which activates the enzyme.

The enzyme catalyses L-seryl-[protein] + ATP = O-phospho-L-seryl-[protein] + ADP + H(+). The catalysed reaction is L-threonyl-[protein] + ATP = O-phospho-L-threonyl-[protein] + ADP + H(+). Activated by tyrosine and threonine phosphorylation. Its function is as follows. Mitogen-activated protein kinase required for growth on media where sorbitol or mannitol is the sole carbon source. This chain is Mitogen-activated protein kinase mpkC (mpkC), found in Aspergillus oryzae (strain ATCC 42149 / RIB 40) (Yellow koji mold).